Consider the following 630-residue polypeptide: 1-deoxy-D-xylulose-5-phosphate synthase (630 aa).

Thiamine diphosphate is bound by residues His-72 and 113 to 115 (GHS). Position 144 (Asp-144) interacts with Mg(2+). Residues 145–146 (GA), Asn-173, Tyr-284, and Glu-367 contribute to the thiamine diphosphate site. Position 173 (Asn-173) interacts with Mg(2+).

This sequence belongs to the transketolase family. DXPS subfamily. Homodimer. The cofactor is Mg(2+). It depends on thiamine diphosphate as a cofactor.

It carries out the reaction D-glyceraldehyde 3-phosphate + pyruvate + H(+) = 1-deoxy-D-xylulose 5-phosphate + CO2. It functions in the pathway metabolic intermediate biosynthesis; 1-deoxy-D-xylulose 5-phosphate biosynthesis; 1-deoxy-D-xylulose 5-phosphate from D-glyceraldehyde 3-phosphate and pyruvate: step 1/1. Functionally, catalyzes the acyloin condensation reaction between C atoms 2 and 3 of pyruvate and glyceraldehyde 3-phosphate to yield 1-deoxy-D-xylulose-5-phosphate (DXP). The polypeptide is 1-deoxy-D-xylulose-5-phosphate synthase (Bacillus cereus (strain AH820)).